We begin with the raw amino-acid sequence, 151 residues long: Deoxyuridine 5'-triphosphate nucleotidohydrolase (151 aa).

Arginine 28 lines the Mg(2+) pocket. Residues 72-74 (PRS), 86-89 (GVID), tyrosine 92, glycine 97, isoleucine 99, and arginine 115 contribute to the dUTP site.

Belongs to the dUTPase family. It depends on Mg(2+) as a cofactor.

It catalyses the reaction dUTP + H2O = dUMP + diphosphate + H(+). This enzyme is involved in nucleotide metabolism: it produces dUMP, the immediate precursor of thymidine nucleotides and it decreases the intracellular concentration of dUTP so that uracil cannot be incorporated into DNA. This is Deoxyuridine 5'-triphosphate nucleotidohydrolase (OPG046) from Monkeypox virus.